Here is a 719-residue protein sequence, read N- to C-terminus: Plasmin and fibronectin-binding protein A (719 aa).

An N-terminal signal peptide occupies residues 1–45 (MLKIVKKLEVLMKYFVPNEVFSIRKLKVGTCSVLLAISILGSQGI). 2 disordered regions span residues 56-76 (PMAT…SPTV) and 109-128 (IRSN…TSTN). 5 PbH1 repeats span residues 287 to 310 (SNNV…QIAG), 362 to 384 (SENV…LVTA), 397 to 419 (PSNI…RFTG), 497 to 523 (VSDI…ELLR), and 525 to 546 (SDNL…VIED). A coiled-coil region spans residues 601–658 (NNLSDKNEKEKNKEEKQSNSNNVIDSNQKNGEFNSSKDNRQMNDKIDNKQDNKTEEVN). Over residues 606–617 (KNEKEKNKEEKQ) the composition is skewed to basic and acidic residues. Residues 606 to 655 (KNEKEKNKEEKQSNSNNVIDSNQKNGEFNSSKDNRQMNDKIDNKQDNKTE) form a disordered region. The segment covering 623–634 (VIDSNQKNGEFN) has biased composition (polar residues). A compositionally biased stretch (basic and acidic residues) spans 635–655 (SSKDNRQMNDKIDNKQDNKTE). An LPXTG sorting signal motif is present at residues 685–689 (LPKTG). Position 688 is a pentaglycyl murein peptidoglycan amidated threonine (T688). A propeptide spans 689-719 (GSNKIMELFLTVTGIGLLLTLKGLKYYGKDK) (removed by sortase).

It is found in the secreted. It localises to the cell wall. Acts as a fibronectin-dependent adhesin and invasin. Binds host (in this case human) fibronectin, plasmin, plasminogen, and human serum albumin. Where the bacteria adhere to human cells there is major recruitment of microvilli which seem to fuse to cover the streptococcal chains. Antibodies to this protein reduce bacterial growth in human blood. In Streptococcus pneumoniae (strain ATCC BAA-255 / R6), this protein is Plasmin and fibronectin-binding protein A (pfbA).